The sequence spans 673 residues: UvrABC system protein B (673 aa).

A Helicase ATP-binding domain is found at 26–183; it reads EGLEDGLAHQ…RRLAELQYTR (158 aa). 39–46 provides a ligand contact to ATP; that stretch reads GVTGSGKT. A Beta-hairpin motif is present at residues 92–115; sequence YYDYYQPEAYVPSSDTFIEKDASV. The Helicase C-terminal domain occupies 431–597; the sequence is QVDDLLSEIR…GLNKKVVDIL (167 aa). One can recognise a UVR domain in the interval 633–668; sequence QQKIHELEGQMMQHAQNLEFEEAAQIRDQLHQLREL.

It belongs to the UvrB family. Forms a heterotetramer with UvrA during the search for lesions. Interacts with UvrC in an incision complex.

It is found in the cytoplasm. Its function is as follows. The UvrABC repair system catalyzes the recognition and processing of DNA lesions. A damage recognition complex composed of 2 UvrA and 2 UvrB subunits scans DNA for abnormalities. Upon binding of the UvrA(2)B(2) complex to a putative damaged site, the DNA wraps around one UvrB monomer. DNA wrap is dependent on ATP binding by UvrB and probably causes local melting of the DNA helix, facilitating insertion of UvrB beta-hairpin between the DNA strands. Then UvrB probes one DNA strand for the presence of a lesion. If a lesion is found the UvrA subunits dissociate and the UvrB-DNA preincision complex is formed. This complex is subsequently bound by UvrC and the second UvrB is released. If no lesion is found, the DNA wraps around the other UvrB subunit that will check the other stand for damage. The chain is UvrABC system protein B from Klebsiella pneumoniae subsp. pneumoniae (strain ATCC 700721 / MGH 78578).